The primary structure comprises 135 residues: ATP synthase epsilon chain (135 aa).

Belongs to the ATPase epsilon chain family. As to quaternary structure, F-type ATPases have 2 components, CF(1) - the catalytic core - and CF(0) - the membrane proton channel. CF(1) has five subunits: alpha(3), beta(3), gamma(1), delta(1), epsilon(1). CF(0) has three main subunits: a, b and c.

It localises to the cell inner membrane. In terms of biological role, produces ATP from ADP in the presence of a proton gradient across the membrane. This chain is ATP synthase epsilon chain, found in Rhizobium etli (strain CIAT 652).